Consider the following 147-residue polypeptide: Methylglyoxal synthase (147 aa).

Positions 1 to 147 constitute an MGS-like domain; the sequence is MKGQRNIGMV…TPYVKRLGAK (147 aa). Substrate is bound by residues histidine 12, lysine 16, 38 to 41, and 59 to 60; these read TGTT and SG. Aspartate 65 acts as the Proton donor/acceptor in catalysis. Residue histidine 92 participates in substrate binding.

Belongs to the methylglyoxal synthase family.

The enzyme catalyses dihydroxyacetone phosphate = methylglyoxal + phosphate. Functionally, catalyzes the formation of methylglyoxal from dihydroxyacetone phosphate. This Oleidesulfovibrio alaskensis (strain ATCC BAA-1058 / DSM 17464 / G20) (Desulfovibrio alaskensis) protein is Methylglyoxal synthase.